The primary structure comprises 129 residues: uncharacterized protein (129 aa).

This is an uncharacterized protein from Bacillus subtilis (strain 168).